The sequence spans 875 residues: cGMP-specific 3',5'-cyclic phosphodiesterase (875 aa).

Disordered stretches follow at residues methionine 1–serine 29 and serine 78–serine 102. A compositionally biased stretch (low complexity) spans glutamine 10–glutamine 22. Positions serine 78 to isoleucine 101 are enriched in polar residues. Phosphoserine is present on serine 102. GAF domains are found at residues aspartate 164–leucine 314 and serine 346–isoleucine 503. A PDEase domain is found at glutamate 536 to glutamine 860. The active-site Proton donor is the histidine 613. Zn(2+) contacts are provided by histidine 617, histidine 653, aspartate 654, and aspartate 764. Aspartate 654 provides a ligand contact to Mg(2+). Glutamine 817 contacts 3',5'-cyclic GMP.

The protein belongs to the cyclic nucleotide phosphodiesterase family. Zn(2+) is required as a cofactor. Requires Mg(2+) as cofactor. In terms of processing, phosphorylation is regulated by binding of cGMP to the two allosteric sites. Phosphorylation by PRKG1 leads to its activation. In terms of tissue distribution, expressed in aortic smooth muscle cells, heart, placenta, skeletal muscle and pancreas and, to a much lesser extent, in brain, liver and lung.

The enzyme catalyses 3',5'-cyclic GMP + H2O = GMP + H(+). Its pathway is purine metabolism; 3',5'-cyclic GMP degradation; GMP from 3',5'-cyclic GMP: step 1/1. Sildenafil (Viagra) is a highly selective and potent inhibitor of PDE5A and is effective in the treatment of penile erectile dysfunction. Also inhibited by zaprinast. Functionally, plays a role in signal transduction by regulating the intracellular concentration of cyclic nucleotides. This phosphodiesterase catalyzes the specific hydrolysis of cGMP to 5'-GMP. Specifically regulates nitric-oxide-generated cGMP. The protein is cGMP-specific 3',5'-cyclic phosphodiesterase of Homo sapiens (Human).